The sequence spans 459 residues: Ribulose bisphosphate carboxylase (459 aa).

Asn111 contributes to the substrate binding site. Residue Lys166 is the Proton acceptor of the active site. Residue Lys168 coordinates substrate. Mg(2+) contacts are provided by Lys191, Asp193, and Glu194. At Lys191 the chain carries N6-carboxylysine. His287 acts as the Proton acceptor in catalysis. Substrate is bound by residues Arg288, His321, and Ser368.

This sequence belongs to the RuBisCO large chain family. Type II subfamily. Homodimer. Requires Mg(2+) as cofactor.

It catalyses the reaction 2 (2R)-3-phosphoglycerate + 2 H(+) = D-ribulose 1,5-bisphosphate + CO2 + H2O. It carries out the reaction D-ribulose 1,5-bisphosphate + O2 = 2-phosphoglycolate + (2R)-3-phosphoglycerate + 2 H(+). RuBisCO catalyzes two reactions: the carboxylation of D-ribulose 1,5-bisphosphate, the primary event in carbon dioxide fixation, as well as the oxidative fragmentation of the pentose substrate. Both reactions occur simultaneously and in competition at the same active site. The protein is Ribulose bisphosphate carboxylase of Cereibacter sphaeroides (Rhodobacter sphaeroides).